The primary structure comprises 964 residues: Reticulon-3 (964 aa).

Residues 1-24 show a composition bias toward low complexity; the sequence is MAESSAATQSPSVSSSSSGAEPSA. 3 disordered regions span residues 1-32, 68-109, and 179-200; these read MAES…GGSP, AGLS…SETL, and WVVK…DRSA. Residue alanine 2 is modified to N-acetylalanine. Topologically, residues 2–795 are cytoplasmic; sequence AESSAATQSP…KKTGFVFGTT (794 aa). At serine 31 the chain carries Phosphoserine. Low complexity predominate over residues 80-91; the sequence is SKSMTSSFLSSS. 7 positions are modified to phosphoserine: serine 217, serine 225, serine 230, serine 233, serine 270, serine 303, and serine 429. The interval 479 to 536 is disordered; it reads ITEKPDSLPSAAAKTSEREIKETPSRETVRSEMCENSEQPQAQPETPTQKSLEGEVAS. The segment covering 493–511 has biased composition (basic and acidic residues); that stretch reads TSEREIKETPSRETVRSEM. Over residues 516 to 527 the composition is skewed to low complexity; sequence EQPQAQPETPTQ. Serine 529 is modified (phosphoserine). Position 593 is a phosphothreonine (threonine 593). Serine 596, serine 597, and serine 673 each carry phosphoserine. Disordered stretches follow at residues 645–674 and 697–723; these read ELSG…TMSP and VQDE…SSSD. Over residues 712 to 723 the composition is skewed to polar residues; that stretch reads FAPQSGPQSSSD. The Reticulon domain occupies 776-964; the sequence is VHDLIFWRDV…LPGIAKKKAE (189 aa). The segment at residues 796–819 is an intramembrane region (helical); that stretch reads LIMLLSLAAFSVISVVSYLILALL. Residues 820-876 lie on the Cytoplasmic side of the membrane; sequence SVTISFRVYKSVIQAVQKSEEGHPFKAYLDVDITLSSEAFHNYMNAAMVHVNKALKL. Residues 877–899 constitute an intramembrane region (helical); that stretch reads IIRLFLVEDLVDSLKLAVFMWLM. The Cytoplasmic portion of the chain corresponds to 900–903; that stretch reads TYVG. The segment at residues 904-926 is an intramembrane region (helical); it reads AVFNGITLLILAELLVFSVPIVY. Positions 919–964 are interaction with FADD; sequence VFSVPIVYEKYKTQIDHYVGIARDQTKSIVEKIQAKLPGIAKKKAE. Topologically, residues 927 to 964 are cytoplasmic; it reads EKYKTQIDHYVGIARDQTKSIVEKIQAKLPGIAKKKAE. Positions 932–934 are interaction with BACE1; it reads QID.

Homodimer. Interacts with RTN4. Isoform 3 interacts with BACE1, BACE2, BCL2 and FADD. Interacts with ATL1 and ATL2. Isoform 3 interacts with TMEM33. Interacts with ZFYVE27 and with KIF5A in a ZFYVE27-dependent manner. Interacts with RIGI. Interacts with TRIM25. In terms of tissue distribution, isoform 1, isoform 3, isoform 4 and isoform 5 are expressed in spinal cord. Isoform 1 is present in brain, where it is expressed in the neurons of cerebral cortex, hippocampus, hypothalamus and cerebellum (at protein level).

The protein resides in the endoplasmic reticulum membrane. It is found in the golgi apparatus membrane. In terms of biological role, may be involved in membrane trafficking in the early secretory pathway. Inhibits BACE1 activity and amyloid precursor protein processing. May induce caspase-8 cascade and apoptosis. May favor BCL2 translocation to the mitochondria upon endoplasmic reticulum stress. Induces the formation of endoplasmic reticulum tubules. Also acts as an inflammation-resolving regulator by interacting with both TRIM25 and RIGI, subsequently impairing RIGI 'Lys-63'-linked polyubiquitination leading to IRF3 and NF-kappa-B inhibition. This chain is Reticulon-3 (Rtn3), found in Mus musculus (Mouse).